The chain runs to 423 residues: Serine hydroxymethyltransferase (423 aa).

Glycine 121–isoleucine 123 contributes to the (6S)-5,6,7,8-tetrahydrofolate binding site. Lysine 227 is subject to N6-(pyridoxal phosphate)lysine. A (6S)-5,6,7,8-tetrahydrofolate-binding site is contributed by glutamate 242.

Belongs to the SHMT family. In terms of assembly, homodimer. Requires pyridoxal 5'-phosphate as cofactor.

It localises to the cytoplasm. The catalysed reaction is 5,10-methylenetetrahydromethanopterin + glycine + H2O = 5,6,7,8-tetrahydromethanopterin + L-serine. Its pathway is amino-acid biosynthesis; glycine biosynthesis; glycine from L-serine: step 1/1. Catalyzes the reversible interconversion of serine and glycine with tetrahydromethanopterin (H4MPT) serving as the one-carbon carrier. Cannot use tetrahydrofolate (THF or H4PteGlu) instead of H4MPT as the pteridine substrate. Also probably exhibits a pteridine-independent aldolase activity toward beta-hydroxyamino acids, producing glycine and aldehydes, via a retro-aldol mechanism. The sequence is that of Serine hydroxymethyltransferase from Methanothermobacter thermautotrophicus (strain ATCC 29096 / DSM 1053 / JCM 10044 / NBRC 100330 / Delta H) (Methanobacterium thermoautotrophicum).